Reading from the N-terminus, the 149-residue chain is Large ribosomal subunit protein bL9 (149 aa).

The protein belongs to the bacterial ribosomal protein bL9 family.

Binds to the 23S rRNA. In Xylella fastidiosa (strain M23), this protein is Large ribosomal subunit protein bL9.